The chain runs to 598 residues: DNA ligase (598 aa).

ATP is bound at residue Asp258. The N6-AMP-lysine intermediate role is filled by Lys260. Arg265, Arg280, Glu310, Phe350, Arg427, and Lys433 together coordinate ATP.

The protein belongs to the ATP-dependent DNA ligase family. It depends on Mg(2+) as a cofactor.

It catalyses the reaction ATP + (deoxyribonucleotide)n-3'-hydroxyl + 5'-phospho-(deoxyribonucleotide)m = (deoxyribonucleotide)n+m + AMP + diphosphate.. DNA ligase that seals nicks in double-stranded DNA during DNA replication, DNA recombination and DNA repair. This Sulfolobus acidocaldarius (strain ATCC 33909 / DSM 639 / JCM 8929 / NBRC 15157 / NCIMB 11770) protein is DNA ligase.